Consider the following 510-residue polypeptide: NAD(P)H-quinone oxidoreductase subunit 2 B, chloroplastic (510 aa).

14 helical membrane passes run 24 to 44, 59 to 79, 99 to 119, 124 to 144, 149 to 169, 184 to 204, 229 to 249, 261 to 281, 295 to 315, 323 to 343, 354 to 374, 395 to 415, 418 to 438, and 484 to 504; these read LLLF…GLIL, WFYF…LFRW, IFQF…VEYI, MAIT…MFLC, LITI…LSGY, LLMG…LYGL, ISIA…LAPF, PTPV…ALAT, WHLL…LLAI, MLAY…IVGD, YMLF…LFGL, ALSL…AGFF, LYLF…IGLL, and MTVC…ILAI.

This sequence belongs to the complex I subunit 2 family. In terms of assembly, NDH is composed of at least 16 different subunits, 5 of which are encoded in the nucleus.

Its subcellular location is the plastid. The protein resides in the chloroplast thylakoid membrane. It catalyses the reaction a plastoquinone + NADH + (n+1) H(+)(in) = a plastoquinol + NAD(+) + n H(+)(out). The enzyme catalyses a plastoquinone + NADPH + (n+1) H(+)(in) = a plastoquinol + NADP(+) + n H(+)(out). Functionally, NDH shuttles electrons from NAD(P)H:plastoquinone, via FMN and iron-sulfur (Fe-S) centers, to quinones in the photosynthetic chain and possibly in a chloroplast respiratory chain. The immediate electron acceptor for the enzyme in this species is believed to be plastoquinone. Couples the redox reaction to proton translocation, and thus conserves the redox energy in a proton gradient. This chain is NAD(P)H-quinone oxidoreductase subunit 2 B, chloroplastic, found in Zea mays (Maize).